Consider the following 507-residue polypeptide: ATP synthase subunit alpha, chloroplastic (507 aa).

ATP is bound at residue 170–177 (GDRQTGKT).

The protein belongs to the ATPase alpha/beta chains family. F-type ATPases have 2 components, CF(1) - the catalytic core - and CF(0) - the membrane proton channel. CF(1) has five subunits: alpha(3), beta(3), gamma(1), delta(1), epsilon(1). CF(0) has four main subunits: a, b, b' and c.

It localises to the plastid. It is found in the chloroplast thylakoid membrane. The catalysed reaction is ATP + H2O + 4 H(+)(in) = ADP + phosphate + 5 H(+)(out). Functionally, produces ATP from ADP in the presence of a proton gradient across the membrane. The alpha chain is a regulatory subunit. The polypeptide is ATP synthase subunit alpha, chloroplastic (Nicotiana tomentosiformis (Tobacco)).